Here is a 259-residue protein sequence, read N- to C-terminus: MENVYISSYSSNEQTSMAVAATDIRELLSQYVDDANLEDLIEWAMEKSSKYYIKNIGNTKSNIEETKFESKNNIGIEYSKDSRNKLSYRNKPSIATNLEYKTLCDMIKGTSGTEKEFLRYLLFGIKCIKKGVEYNIDKIKDVSYNDYFNVLDEKYNTPCPNCKSRNTTPMMIQTRAADEPPLVRHACRDCKQHFKPPKFRAFRNLNVTTQSIHENKEITEILPDNNPSPPESPEPASPIDDGLIRSTFDRNDEPPEDDE.

The TFIIS-type zinc-finger motif lies at 155-195; sequence YNTPCPNCKSRNTTPMMIQTRAADEPPLVRHACRDCKQHFK. 4 residues coordinate Zn(2+): Cys-159, Cys-162, Cys-187, and Cys-190. The interval 214 to 259 is disordered; the sequence is ENKEITEILPDNNPSPPESPEPASPIDDGLIRSTFDRNDEPPEDDE. The segment covering 226–236 has biased composition (pro residues); it reads NPSPPESPEPA.

It belongs to the poxviridae DNA-directed RNA polymerase 30 kDa subunit family. In terms of assembly, the DNA-dependent RNA polymerase (vRNAP) consists of eight subunits encoded by early viral genes and termed according to their apparent molecular masses Rpo147, Rpo132, Rpo35, Rpo30, Rpo22, Rpo19, Rpo18, and Rpo7. The same holoenzyme, with the addition of the transcription-specificity factor RAP94, is used for early gene expression.

It is found in the virion. It localises to the host cytoplasm. It carries out the reaction RNA(n) + a ribonucleoside 5'-triphosphate = RNA(n+1) + diphosphate. In terms of biological role, part of the DNA-dependent RNA polymerase which catalyzes the transcription of viral DNA into RNA using the four ribonucleoside triphosphates as substrates. Responsible for the transcription of early, intermediate and late genes. DNA-dependent RNA polymerase associates with the early transcription factor (ETF), itself composed of OPG118/D6 and OPG134/A8, thereby allowing the early genes transcription. Late transcription, and probably also intermediate transcription, require newly synthesized RNA polymerase. The protein is DNA-directed RNA polymerase 30 kDa polypeptide (OPG066) of Homo sapiens (Human).